The primary structure comprises 262 residues: Mlc titration factor A (262 aa).

Zn(2+) is bound by residues H111, H148, H152, and E211.

Belongs to the MtfA family. Interacts with Mlc. It depends on Zn(2+) as a cofactor.

The protein resides in the cytoplasm. Its function is as follows. Involved in the modulation of the activity of the glucose-phosphotransferase system (glucose-PTS). Interacts with the transcriptional repressor Mlc, preventing its interaction with DNA and leading to the modulation of expression of genes regulated by Mlc, including ptsG, which encodes the PTS system glucose-specific EIICB component. In terms of biological role, shows zinc-dependent metallopeptidase activity. This is Mlc titration factor A from Serratia proteamaculans (strain 568).